A 186-amino-acid chain; its full sequence is Putative inactive recombination-promoting nuclease-like protein YjiQ (186 aa).

Belongs to the Rpn/YhgA-like nuclease family.

Its function is as follows. This pseudogene is the C-terminal fragment of low activity DNA endonuclease RpnD which probably yields 3'-hydroxyl ends. The intact protein can be seen in this entry (AC B7NGZ6). Expression of the repaired protein increases the frequency of recA-independent recombination, but also decreases viability probably via DNA damage; in a RecA strain expression has no effect on viability but does induce the SOS repair response. May play a role in horizontal gene transfer. This chain is Putative inactive recombination-promoting nuclease-like protein YjiQ (yjiQ), found in Escherichia coli (strain K12).